We begin with the raw amino-acid sequence, 255 residues long: Ly6/PLAUR domain-containing protein 8 (255 aa).

A signal peptide spans 1–20 (MRGVFIAGVIAAFAITVVDS). N-linked (GlcNAc...) asparagine glycosylation is found at Asn22, Asn30, Asn53, Asn72, Asn76, Asn105, Asn115, Asn128, Asn154, Asn169, Asn179, Asn200, and Asn210. In terms of domain architecture, UPAR/Ly6 spans 121-170 (CMSCYGHNKTLCEEKPQKCYEGEQCVFIIAEMVNGSGRVELKGCSDISNS). Ser233 carries GPI-anchor amidated serine lipidation. The propeptide at 234–255 (MGTKASFTSSIFGSLLLLKLLF) is removed in mature form.

It belongs to the CNF-like-inhibitor family. Post-translationally, highly N-glycosylated. Not O-glycosylated. In terms of processing, GPI-anchored. The GPI-anchor is cleaved, leading to secretion into the colonic lumen. Specifically present in enterocytes located at the uppermost epithelial layer of the colon (at protein level). Exclusively expressed in the large intestine: specifically expressed on the apical surface of epithelial cells located at the uppermost layer of the colonic gland.

It is found in the cell membrane. It localises to the secreted. Functionally, secreted protein specifically required to prevent invasion of Gram-negative bacteria in the inner mucus layer of the colon epithelium, a portion of the large intestine which is free of commensal microbiota. Prevents invasion of flagellated microbiota by binding to the flagellum of bacteria, such as P.mirabilis, thereby inhibiting bacterial motility in the intestinal lumen. Segregation of intestinal bacteria and epithelial cells in the colon is required to preserve intestinal homeostasis. The chain is Ly6/PLAUR domain-containing protein 8 from Mus musculus (Mouse).